Here is a 299-residue protein sequence, read N- to C-terminus: Ent-kaurene oxidase-like protein 1 (299 aa).

The chain crosses the membrane as a helical span at residues 16-36 (AVVGVFVAAAVVGGFVAAVAL).

The protein belongs to the cytochrome P450 family. As to expression, expressed in roots and panicles.

Its subcellular location is the membrane. This chain is Ent-kaurene oxidase-like protein 1, found in Oryza sativa subsp. japonica (Rice).